Consider the following 2037-residue polypeptide: MDYDDSDFQNQNLHLAGEANNKFPPVLQPYALPKFDFDDTLNTHLRFDSLGESEAFLGIEGNEDNNWIEDFSRGSSGIVFSSGATESCAISRHNNVWSEATSSESVAMLLNSVGQDEVIVREDTIKKSDTSHELGCTMETVEPGQTSHERSLSKEETVNLQPNPSVDDTPGESSVVKTDDGQEQVLVKDDSPTAVEEASVEEKNSILTSNTATVEAIDTTDLGKIGTETTDNLLDQTEEKANVESRMEDDCSDGNVQTIITCSGELNNQSTLLPETSNDENVISDHIQSSYNRNDLTADARSILVEGHSDSHIDSASEVEKVEAENIGKTAKPDLKEIELSDVTVLERGDQAPSTLEVGGQDVSGTECQDLLVSTVHTSVAVEASLELAGELTTITNSVSIEKPELLSHQHMEVITSEHESTFQIETETYPQIHVFETSESVYISTMDSMVEAREGGVSKKSDNEGSARTSNLEQSMELPVNANDRDQDVKNSQILSESVVSGSVGYVSGGSTSELAESESQSDSIPTDKSETMIDSSLNLEELQPLSQDGAPAVSLTSSIDLHMVKTSSDDSDQGSYSETKKVYGEPENGQTVPPVDASCSGSQMDQEARKRAEGTKQSTYSVEGCPRSEGSKDAVDADGVGQVLQQQSEELIFEENVVTEAVKAPETLSVLDKDNKNEMPITSSLPILGSEAGKDGQEEDNTAASGGIMAAGTPVTHPKGDAIVLGDSRASTCSESSVKSYVTAIEDAATNLKTPLDSFPTVKTSELQFNNTETNSVKKPEDQNISGFMSAGSPVLNRNETSSSEMNLTPDQLKAGKISKAVIFSQATLVSPIVVGSPSTSSLDKTAAKSSKAKSERKPRRTSKSVGKETSRKGTSVKGATPIEQFQSGGKTNAVNQSLASHIQITQSTEKQRSLQSPALKAFGSLSTPTASLPDLNSSALSSILRRPFTDLQQVQLRAQIFVYGALIQGTAPDEAYMISAFGGADGGKGSWEKSWRTCVVRAQKSLVATPETPLQSRPGKTETPSAGHTNSKESSGTNPMIPLSSPLWSLSTSVDTLQSSSVQRGSAATHQPLLSASHAHQTPPTQNIVGHNTPWMSPLPFRNAWLASQQTSGFDVGSRFPVYPITDPVKLTPMKESSMTLSGAKHVQSGTSSNVSKVTPTLEPTSTVVAPAQHSTRVKSRKRKKMPVSVESGPNILNSLKQTELAASPLVPFTPTPANLGYNAGTLPSVVSMTAVPMDLVSTFPGKKIKSSFPSPIFGGNLVREVKQRSVLSEDTIEKLKEAKMHAEDASALATAAVSHSEYVWKQIEQQSHAGLQPETQDRLASAAVAIAAAAAVAKAAAAAANVAANAALQAKLMAEEASLPNASDQGLPKSYDSILPGQGTPASILKGEGAVVNSSSVLIAAREASKKRVEAATAATKRAENMDSIVKAAELASEAVSQAGILVSMGHPPLLNKLVEAGPSNYWRQAQESQEVQPCKTVVLEKETVSTSEGTFAGPKIVQTEFGGSVNTADGVSGPVPATGKLKGQEGDKYADLAKNNDVVFEPEVGSKFSIDAQQTIKATKNEDIKEGSNVEVFKEEPGLRTAWYSANVLSLEDDKAYVLFSDLSVEQGTDKLKEWVALKGEGDQAPKIRPARSVTALPYEGTRKRRRAALGDHIWKIGDRVDSWVHDSWLEGVITEKNKKDENTVTVHFPAEEETLTIKAWNLRPSLVWKDGKWIECSSSGETISSSHEGDTPKEKRPRLGTPALVAEVKDTSMKIVDDPDLGKPPQTGVLNLGVSENTFNIGKSTREENKPDPLRMKRTGLQKQGSKVIFGVPKPGKKRKFMDVSKHYVSEASTKTQERKEPVKPVRSIVPQNSGIGSWKMPSKTISIEKQTTISRPKTFKPAPKPKEKPGATARIIPRKDSRNTTASDMESDESAENRGPGSGVSFKGTVEEQTTSSSHDTGSKNSSSLSTNKGRVAPTAGRLAKIEEDKALAENSSKTSEGMEPRRSIRRIQPTSRLLEGLQTSMMTSKIPSVSHSKSHLSQSKK.

Disordered stretches follow at residues 141–179, 454–487, 504–531, 567–637, 686–705, 837–893, 1011–1045, 1148–1197, 1729–1748, 1793–1812, and 1841–2037; these read VEPG…VKTD, REGG…NDRD, SVGY…TDKS, KTSS…KDAV, SLPI…DNTA, VGSP…SGGK, ATPE…PMIP, KHVQ…ESGP, SGET…KRPR, KSTR…TGLQ, and EAST…QSKK. Basic and acidic residues predominate over residues 147-157; sequence SHERSLSKEET. Polar residues predominate over residues 158-176; it reads VNLQPNPSVDDTPGESSVV. Positions 454–466 are enriched in basic and acidic residues; that stretch reads REGGVSKKSDNEG. The span at 504–514 shows a compositional bias: low complexity; the sequence is SVGYVSGGSTS. Residues 515 to 526 show a composition bias toward polar residues; it reads ELAESESQSDSI. The segment covering 841–852 has biased composition (low complexity); that stretch reads STSSLDKTAAKS. A compositionally biased stretch (basic residues) spans 853-865; the sequence is SKAKSERKPRRTS. Composition is skewed to polar residues over residues 1025–1041 and 1151–1171; these read ETPS…SGTN and QSGT…TSTV. Residues 1179–1189 are compositionally biased toward basic residues; that stretch reads TRVKSRKRKKM. Basic and acidic residues predominate over residues 1794 to 1805; sequence STREENKPDPLR. Polar residues-rich tracts occupy residues 1874–1886, 1942–1964, and 2013–2023; these read KTIS…TISR, EEQT…STNK, and LQTSMMTSKIP. Residues 2028-2037 show a composition bias toward basic residues; sequence SKSHLSQSKK.

As to quaternary structure, interacts with importin alpha IMPA1 and IMPA2, required for nuclear-localized proteins import. In terms of tissue distribution, mainly expressed in seedlings, flower buds and stems, and, to a lower extent, in leaves and siliques.

The protein resides in the nucleus. In terms of biological role, under salt stress, appears to prevent the accumulation of reactive oxygen species (ROS) in roots and required for the maintenance of cell wall integrity (cellulose, pectin and lignin composition) by interacting with importin alpha (e.g. IMPA1 and IMPA2) and binding to the promoter of several ROS- and cell wall-related genes to regulate their expression. Necessary for cells organization in meristems and root elongation zones as well as for root elongation in high salinity, but not upon osmotic stress. This is Protein SWOLLEN 1 from Arabidopsis thaliana (Mouse-ear cress).